Here is a 351-residue protein sequence, read N- to C-terminus: 1-aminocyclopropane-1-carboxylate oxidase homolog 4 (351 aa).

In terms of domain architecture, Fe2OG dioxygenase spans 200–304 (KSQYMVGQHY…AIVFSTFMRA (105 aa)). Fe cation is bound by residues histidine 224, aspartate 226, and histidine 280. Arginine 291 provides a ligand contact to 2-oxoglutarate.

This sequence belongs to the iron/ascorbate-dependent oxidoreductase family. Fe(2+) is required as a cofactor.

The chain is 1-aminocyclopropane-1-carboxylate oxidase homolog 4 from Arabidopsis thaliana (Mouse-ear cress).